Consider the following 425-residue polypeptide: Protein CLP1 homolog (425 aa).

ATP is bound by residues Glu-18, Lys-59, and Asp-121–Thr-126.

Belongs to the Clp1 family. Clp1 subfamily.

The protein resides in the nucleus. Its function is as follows. Required for endonucleolytic cleavage during polyadenylation-dependent pre-mRNA 3'-end formation. The chain is Protein CLP1 homolog (cbc) from Drosophila mojavensis (Fruit fly).